We begin with the raw amino-acid sequence, 196 residues long: Putative NADH dehydrogenase/NAD(P)H nitroreductase Rpal_4764 (196 aa).

This sequence belongs to the nitroreductase family. HadB/RutE subfamily. Requires FMN as cofactor.

The sequence is that of Putative NADH dehydrogenase/NAD(P)H nitroreductase Rpal_4764 from Rhodopseudomonas palustris (strain TIE-1).